A 142-amino-acid polypeptide reads, in one-letter code: Large ribosomal subunit protein mL43 (142 aa).

This sequence belongs to the mitochondrion-specific ribosomal protein mL43 family. In terms of assembly, component of the mitochondrial large ribosomal subunit. Mature mitochondrial ribosomes consist of a small (37S) and a large (54S) subunit. The 37S subunit contains at least 33 different proteins and 1 molecule of RNA (15S). The 54S subunit contains at least 45 different proteins and 1 molecule of RNA (21S).

It localises to the mitochondrion. In Eremothecium gossypii (strain ATCC 10895 / CBS 109.51 / FGSC 9923 / NRRL Y-1056) (Yeast), this protein is Large ribosomal subunit protein mL43 (MRPL51).